The sequence spans 83 residues: Small ribosomal subunit protein eS21 (83 aa).

It belongs to the eukaryotic ribosomal protein eS21 family. In terms of assembly, component of the 40S small ribosomal subunit. Interacts with sta.

The protein localises to the cytoplasm. It is found in the cytosol. The protein resides in the rough endoplasmic reticulum. In terms of biological role, may be an associated component of the ribosome rather than a core structural subunit. May act as a translation initiation factor. Has a role in regulation of cell proliferation in the hematopoietic organs and the imaginal disks of larva. This is Small ribosomal subunit protein eS21 (RpS21) from Drosophila simulans (Fruit fly).